A 322-amino-acid polypeptide reads, in one-letter code: Thioredoxin reductase (322 aa).

FAD is bound by residues 11–14 (SGPA), 40–41 (IA), Gln-45, Asn-54, Val-87, and Cys-145. An intrachain disulfide couples Cys-142 to Cys-145. Ser-192 is modified (phosphoserine). Thr-278 is subject to Phosphothreonine. Phosphoserine is present on Ser-279. Residues Asp-288 and 295 to 297 (RQA) contribute to the FAD site.

Belongs to the class-II pyridine nucleotide-disulfide oxidoreductase family. In terms of assembly, homodimer. FAD serves as cofactor.

It localises to the cytoplasm. The enzyme catalyses [thioredoxin]-dithiol + NADP(+) = [thioredoxin]-disulfide + NADPH + H(+). This is Thioredoxin reductase (trr1) from Schizosaccharomyces pombe (strain 972 / ATCC 24843) (Fission yeast).